A 102-amino-acid polypeptide reads, in one-letter code: Small ribosomal subunit protein uS10 (102 aa).

It belongs to the universal ribosomal protein uS10 family. In terms of assembly, part of the 30S ribosomal subunit.

Its function is as follows. Involved in the binding of tRNA to the ribosomes. This Nitrosomonas eutropha (strain DSM 101675 / C91 / Nm57) protein is Small ribosomal subunit protein uS10.